A 180-amino-acid polypeptide reads, in one-letter code: Amnesiac neuropeptides (180 aa).

Positions 1–32 (MRSFCCCFYPAAVALHCVLLFYTFFLLFRASA) are cleaved as a signal peptide. 2 propeptides span residues 33–35 (LRR) and 152–180 (GRRS…GEMR). Residues 155 to 180 (SVPRGQPKFSRENPRALSPSLLGEMR) form a disordered region.

In terms of tissue distribution, enriched expression in the embryonic and larval nervous systems. Strongly expressed in two large neurons that project over all the lobes of the mushroom bodies.

The protein resides in the secreted. Its function is as follows. Required for associative learning and memory in adults. Expression pattern suggests a modulatory role in memory formation. Controls neurotransmitter-mediated signaling pathways associated with the structure of the larval peripheral nerve. In Drosophila melanogaster (Fruit fly), this protein is Amnesiac neuropeptides (amn).